Consider the following 183-residue polypeptide: Capsid protein (183 aa).

Residues 136–183 (NAPILSTLPETTVVRRRGRSPRRRTPSPRRRRSQSPRRRRSQSPASQC) form a disordered region. Residues 149–176 (VRRRGRSPRRRTPSPRRRRSQSPRRRRS) are compositionally biased toward basic residues. Phosphoserine; by host occurs at positions 155, 162, and 170. The stretch at 155–161 (SPRRRTP) is one 1; half-length repeat. The interval 155 to 177 (SPRRRTPSPRRRRSQSPRRRRSQ) is 3 X 8 AA repeats of S-P-R-R-R-[PR]-S-Q. The Bipartite nuclear localization signal motif lies at 158–175 (RRTPSPRRRRSQSPRRRR). 2 tandem repeats follow at residues 162–169 (SPRRRRSQ) and 170–177 (SPRRRRSQ). Residues 177–183 (QSPASQC) form an RNA binding region.

The protein belongs to the orthohepadnavirus core antigen family. In terms of assembly, homodimerizes, then multimerizes. Interacts with cytosol exposed regions of viral L glycoprotein present in the reticulum-to-Golgi compartment. Interacts with human FLNB. Phosphorylated form interacts with host importin alpha; this interaction depends on the exposure of the NLS, which itself depends upon genome maturation and/or phosphorylation of the capsid protein. Interacts with host NUP153. In terms of processing, phosphorylated by host SRPK1, SRPK2, and maybe protein kinase C or GAPDH. Phosphorylation is critical for pregenomic RNA packaging. Protein kinase C phosphorylation is stimulated by HBx protein and may play a role in transport of the viral genome to the nucleus at the late step during the viral replication cycle.

Its subcellular location is the virion. It localises to the host cytoplasm. Functionally, self assembles to form an icosahedral capsid. Most capsids appear to be large particles with an icosahedral symmetry of T=4 and consist of 240 copies of capsid protein, though a fraction forms smaller T=3 particles consisting of 180 capsid proteins. Entering capsids are transported along microtubules to the nucleus. Phosphorylation of the capsid is thought to induce exposure of nuclear localization signal in the C-terminal portion of the capsid protein that allows binding to the nuclear pore complex via the importin (karyopherin-) alpha and beta. Capsids are imported in intact form through the nuclear pore into the nuclear basket, where it probably binds NUP153. Only capsids that contain the mature viral genome can release the viral DNA and capsid protein into the nucleoplasm. Immature capsids get stuck in the basket. Capsids encapsulate the pre-genomic RNA and the P protein. Pre-genomic RNA is reverse-transcribed into DNA while the capsid is still in the cytoplasm. The capsid can then either be directed to the nucleus, providing more genomes for transcription, or bud through the endoplasmic reticulum to provide new virions. The chain is Capsid protein from Homo sapiens (Human).